Here is a 164-residue protein sequence, read N- to C-terminus: Phosphopantetheine adenylyltransferase (164 aa).

S10 provides a ligand contact to substrate. ATP is bound by residues 10–11 and H18; that span reads SF. 3 residues coordinate substrate: K42, T79, and R93. Residues 94–96, E104, and 129–135 each bind ATP; these read GLR and VRPIAAT.

Belongs to the bacterial CoaD family. In terms of assembly, homohexamer. It depends on Mg(2+) as a cofactor.

The protein resides in the cytoplasm. It catalyses the reaction (R)-4'-phosphopantetheine + ATP + H(+) = 3'-dephospho-CoA + diphosphate. Its pathway is cofactor biosynthesis; coenzyme A biosynthesis; CoA from (R)-pantothenate: step 4/5. Its function is as follows. Reversibly transfers an adenylyl group from ATP to 4'-phosphopantetheine, yielding dephospho-CoA (dPCoA) and pyrophosphate. The chain is Phosphopantetheine adenylyltransferase from Bradyrhizobium sp. (strain BTAi1 / ATCC BAA-1182).